The chain runs to 641 residues: Fructose-1,6-bisphosphatase class 3 (641 aa).

The protein belongs to the FBPase class 3 family. The cofactor is Mn(2+).

It carries out the reaction beta-D-fructose 1,6-bisphosphate + H2O = beta-D-fructose 6-phosphate + phosphate. It functions in the pathway carbohydrate biosynthesis; gluconeogenesis. In Bacillus velezensis (strain DSM 23117 / BGSC 10A6 / LMG 26770 / FZB42) (Bacillus amyloliquefaciens subsp. plantarum), this protein is Fructose-1,6-bisphosphatase class 3.